Consider the following 193-residue polypeptide: ATP synthase subunit b 1 (193 aa).

Residues 13–32 (PAVTGGDTHSGTGVPAEAHG) are disordered. A helical transmembrane segment spans residues 40 to 60 (ATFPSQLLWLAITFGLFYLFL).

The protein belongs to the ATPase B chain family. As to quaternary structure, F-type ATPases have 2 components, F(1) - the catalytic core - and F(0) - the membrane proton channel. F(1) has five subunits: alpha(3), beta(3), gamma(1), delta(1), epsilon(1). F(0) has three main subunits: a(1), b(2) and c(10-14). The alpha and beta chains form an alternating ring which encloses part of the gamma chain. F(1) is attached to F(0) by a central stalk formed by the gamma and epsilon chains, while a peripheral stalk is formed by the delta and b chains.

The protein localises to the cell inner membrane. In terms of biological role, f(1)F(0) ATP synthase produces ATP from ADP in the presence of a proton or sodium gradient. F-type ATPases consist of two structural domains, F(1) containing the extramembraneous catalytic core and F(0) containing the membrane proton channel, linked together by a central stalk and a peripheral stalk. During catalysis, ATP synthesis in the catalytic domain of F(1) is coupled via a rotary mechanism of the central stalk subunits to proton translocation. Functionally, component of the F(0) channel, it forms part of the peripheral stalk, linking F(1) to F(0). This chain is ATP synthase subunit b 1, found in Mesorhizobium japonicum (strain LMG 29417 / CECT 9101 / MAFF 303099) (Mesorhizobium loti (strain MAFF 303099)).